The following is a 126-amino-acid chain: Adenosine 5'-monophosphoramidase HINT1 (126 aa).

Ala2 carries the post-translational modification N-acetylalanine. The HIT domain maps to 18–126 (IFGKIIRKEI…GGRQMHWPPG (109 aa)). 2 positions are modified to N6-acetyllysine: Lys21 and Lys30. 43-44 (DI) contacts AMP. Phosphoserine is present on residues Ser45 and Ser72. Residues Asn99, 105–107 (GQS), and 112–114 (HLH) contribute to the AMP site. The short motif at 110 to 114 (HVHLH) is the Histidine triad motif element. His112 (tele-AMP-histidine intermediate) is an active-site residue.

The protein belongs to the HINT family. In terms of assembly, homodimer. Interacts with CDK7. Interacts with RUVBL1 and RUVBL2 and is associated with the LEF1/TCF1-CTNNB1 complex and with a KAT5 histone acetyltransferase complex. Identified in a complex with MITF and CTNNB1. Interacts with CDC34 and RBX1, and is part of a SCF (SKP2-CUL1-F-box protein) E3 ubiquitin-protein ligase complex. Interacts with SUMO1, SUMO2 and RGS17. Interacts with the Ten-1 ICD form of TENM1. Interacts with CALM1; interaction increases in the presence of calcium ions.

Its subcellular location is the cytoplasm. It localises to the nucleus. It catalyses the reaction adenosine 5'-phosphoramidate + H2O = AMP + NH4(+). In terms of biological role, exhibits adenosine 5'-monophosphoramidase activity, hydrolyzing purine nucleotide phosphoramidates with a single phosphate group such as adenosine 5'monophosphoramidate (AMP-NH2) to yield AMP and NH2. Hydrolyzes adenosine 5'monophosphomorpholidate (AMP-morpholidate) and guanosine 5'monophosphomorpholidate (GMP-morpholidate). Hydrolyzes lysyl-AMP (AMP-N-epsilon-(N-alpha-acetyl lysine methyl ester)) generated by lysine tRNA ligase, as well as Met-AMP, His-AMP and Asp-AMP, lysyl-GMP (GMP-N-epsilon-(N-alpha-acetyl lysine methyl ester)) and AMP-N-alanine methyl ester. Can also convert adenosine 5'-O-phosphorothioate and guanosine 5'-O-phosphorothioate to the corresponding nucleoside 5'-O-phosphates with concomitant release of hydrogen sulfide. In addition, functions as a scaffolding protein that modulates transcriptional activation by the LEF1/TCF1-CTNNB1 complex and by the complex formed with MITF and CTNNB1. Modulates p53/TP53 levels and p53/TP53-mediated apoptosis. Modulates proteasomal degradation of target proteins by the SCF (SKP2-CUL1-F-box protein) E3 ubiquitin-protein ligase complex. Also exhibits SUMO-specific isopeptidase activity, deconjugating SUMO1 from RANGAP1 and RGS17. The protein is Adenosine 5'-monophosphoramidase HINT1 (HINT1) of Pongo abelii (Sumatran orangutan).